Here is a 487-residue protein sequence, read N- to C-terminus: Protein NEN2 (487 aa).

The Exonuclease domain maps to 18–179; sequence FFDVETTIPF…LDDVRMNFEV (162 aa). 2 residues coordinate Mg(2+): aspartate 20 and glutamate 22. Catalysis depends on histidine 167, which acts as the Proton donor/acceptor. Residue aspartate 172 coordinates Mg(2+). Disordered stretches follow at residues 200-233 and 269-291; these read NSVT…TGEN and SDVP…GTGD. Residues 221–233 show a composition bias toward polar residues; the sequence is PLQSPTDQQTGEN.

Mg(2+) serves as cofactor. As to expression, expressed in the sieve elements and phloem pole pericycle cells.

It is found in the cytoplasm. It localises to the nucleus. Its function is as follows. Probable exonuclease involved in enuclation of sieve elements. The sequence is that of Protein NEN2 from Arabidopsis thaliana (Mouse-ear cress).